Consider the following 31-residue polypeptide: Cyclotide cter-D (31 aa).

Residues glycine 1–asparagine 31 constitute a cross-link (cyclopeptide (Gly-Asn)). 3 disulfides stabilise this stretch: cysteine 4/cysteine 21, cysteine 8/cysteine 23, and cysteine 13/cysteine 28.

Post-translationally, contains 3 disulfide bonds. This is a cyclic peptide. In terms of tissue distribution, expressed in root, seed and nodule but not in flower, stem, shoot, leaf and pod.

Its function is as follows. Probably participates in a plant defense mechanism. The polypeptide is Cyclotide cter-D (Clitoria ternatea (Butterfly pea)).